We begin with the raw amino-acid sequence, 125 residues long: MKLLTHNLLSSHVRGVGTRGFPLRLQATEVRINPVEFNPEFVARMIPKVEWAALVQAADTLNLAEVPKEPTEGYEHDETFLRKMHHVLLEVDVLEGTLQCPESGRLFPISRGIPNMLLNDEETET.

The TRM112 domain occupies 2-119 (KLLTHNLLSS…SRGIPNMLLN (118 aa)).

It belongs to the TRM112 family. In terms of assembly, part of the heterodimeric BUD23-TRM112 methyltransferase complex; this heterodimerization is necessary for the metabolic stability and activity of the catalytic subunit BUD23. Part of the heterodimeric N6AMT1-TRM112 methyltransferase complex; this heterodimerization is necessary for S-adenosyl-L-methionine-binding to N6AMT1/HEMK2. Part of the heterodimeric ALKBH8-TRM112 methyltransferase complex. Part of the heterodimeric METTL5-TRM112 methyltransferase complex; this heterodimerization is necessary for the stability of the catalytic subunit METTL5. Part of the heterodimeric THUMPD3-TRM112 methyltransferase complex; this complex forms an active tRNA methyltransferase, where TRMT112 acts as an activator of the catalytic subunit THUMPD3. Part of the heterodimeric THUMPD2-TRM112 methyltransferase complex; this complex forms an active tRNA methyltransferase, where TRMT112 acts as an activator of the catalytic subunit THUMPD2. Part of the heterodimeric TRMT11-TRM112 methyltransferase complex; this complex forms an active tRNA methyltransferase, where TRMT112 acts as an activator of the catalytic subunit TRMT11. Abundantly expressed in the testis, also expressed in the brain, heart, kidney, liver, lung, muscle and spleen.

It localises to the nucleus. It is found in the nucleoplasm. Its subcellular location is the cytoplasm. The protein localises to the perinuclear region. Functionally, acts as an activator of both rRNA/tRNA and protein methyltransferases. Together with methyltransferase BUD23, methylates the N(7) position of a guanine in 18S rRNA. The heterodimer with HEMK2/N6AMT1 catalyzes N5-methylation of ETF1 on 'Gln-185', using S-adenosyl L-methionine as methyl donor. The heterodimer with ALKBH8 catalyzes the methylation of 5-carboxymethyl uridine to 5-methylcarboxymethyl uridine at the wobble position of the anticodon loop in target tRNA species. Together with methyltransferase THUMPD3, catalyzes the formation of N(2)-methylguanosine at position 6 in a broad range of tRNA substrates and at position 7 of tRNA(Trp). Involved in the pre-rRNA processing steps leading to small-subunit rRNA production. Together with methyltransferase METTL5, specifically methylates the 6th position of adenine in position 1832 of 18S rRNA. In Mus musculus (Mouse), this protein is Multifunctional methyltransferase subunit TRM112-like protein (Trmt112).